A 395-amino-acid polypeptide reads, in one-letter code: Phosphoglycerate kinase (395 aa).

Residues 21–23 (DLN), Arg36, 59–62 (HLGR), Arg113, and Arg146 contribute to the substrate site. Residues Lys197, Glu324, and 350–353 (GGDT) each bind ATP.

The protein belongs to the phosphoglycerate kinase family. As to quaternary structure, monomer.

It localises to the cytoplasm. The enzyme catalyses (2R)-3-phosphoglycerate + ATP = (2R)-3-phospho-glyceroyl phosphate + ADP. Its pathway is carbohydrate degradation; glycolysis; pyruvate from D-glyceraldehyde 3-phosphate: step 2/5. This is Phosphoglycerate kinase from Acinetobacter baumannii (strain ATCC 17978 / DSM 105126 / CIP 53.77 / LMG 1025 / NCDC KC755 / 5377).